The primary structure comprises 165 residues: Large ribosomal subunit protein uL11A (165 aa).

Position 2 is a n,N-dimethylproline; by NTM1 (Pro2). Residues Lys4 and Lys11 each carry the N6,N6,N6-trimethyllysine; by RKM2 modification. Ser25 and Ser38 each carry phosphoserine. N5-methylarginine; by RMT2 is present on Arg67. Residues Lys130 and Lys146 each participate in a glycyl lysine isopeptide (Lys-Gly) (interchain with G-Cter in ubiquitin) cross-link.

This sequence belongs to the universal ribosomal protein uL11 family. As to quaternary structure, component of the large ribosomal subunit (LSU). Mature yeast ribosomes consist of a small (40S) and a large (60S) subunit. The 40S small subunit contains 1 molecule of ribosomal RNA (18S rRNA) and 33 different proteins (encoded by 57 genes). The large 60S subunit contains 3 rRNA molecules (25S, 5.8S and 5S rRNA) and 46 different proteins (encoded by 81 genes). Post-translationally, it appears that the main modified species for L12 contains 6 methyl groups, 2 on Pro-2, 3 on Lys-4 and 1 on Arg-67. Although not reproduced with a second method, methylation at Lys-11 cannot be ruled out.

The protein localises to the cytoplasm. In terms of biological role, component of the ribosome, a large ribonucleoprotein complex responsible for the synthesis of proteins in the cell. The small ribosomal subunit (SSU) binds messenger RNAs (mRNAs) and translates the encoded message by selecting cognate aminoacyl-transfer RNA (tRNA) molecules. The large subunit (LSU) contains the ribosomal catalytic site termed the peptidyl transferase center (PTC), which catalyzes the formation of peptide bonds, thereby polymerizing the amino acids delivered by tRNAs into a polypeptide chain. The nascent polypeptides leave the ribosome through a tunnel in the LSU and interact with protein factors that function in enzymatic processing, targeting, and the membrane insertion of nascent chains at the exit of the ribosomal tunnel. The chain is Large ribosomal subunit protein uL11A from Saccharomyces cerevisiae (strain ATCC 204508 / S288c) (Baker's yeast).